A 272-amino-acid chain; its full sequence is Serine/arginine-rich splicing factor 5 (272 aa).

One can recognise an RRM 1 domain in the interval 4–74 (CRVFIGRLNP…ERVTIEHARA (71 aa)). The interval 73-105 (RARSRGGRGRGRYSDRFSSRRPRNDRRNAPPVR) is disordered. Over residues 74–83 (ARSRGGRGRG) the composition is skewed to basic residues. Residue serine 86 is modified to Phosphoserine. Positions 108-181 (NRLIVENLSS…RKIKLIEGSK (74 aa)) constitute an RRM 2 domain. Lysine 167 bears the N6-acetyllysine mark. A disordered region spans residues 174-272 (IKLIEGSKRH…SRSRSVDSGN (99 aa)). The segment covering 182 to 229 (RHSRSRSRSRSRTRSSSRSRSRSRSRSRKSYSRSRSRSRSRSRSKSRS) has biased composition (basic residues). Phosphoserine is present on residues serine 227, serine 229, serine 233, serine 250, and serine 253. Positions 242–254 (RGSSSRSKSPASV) are enriched in low complexity.

The protein belongs to the splicing factor SR family. Interacts (via RS domain) with PHF5A (via N-terminus). Found in a pre-mRNA splicing complex with SRSF4/SFRS4, SRSF5/SFRS5, SNRNP70, SNRPA1, SRRM1 and SRRM2. Extensively phosphorylated on serine residues in the RS domain.

Its subcellular location is the nucleus. In terms of biological role, plays a role in constitutive splicing and can modulate the selection of alternative splice sites. The protein is Serine/arginine-rich splicing factor 5 (SRSF5) of Homo sapiens (Human).